A 431-amino-acid chain; its full sequence is Transmembrane protease serine 11C (431 aa).

Over 1 to 33 (MARGQPRRSEEQWTALQNRTECKTKIKLTRCGK) the chain is Cytoplasmic. The chain crosses the membrane as a helical; Signal-anchor for type II membrane protein span at residues 34 to 54 (ITLGILTAVLAAVLIGLIAYF). Residues 55–431 (AACGKDSFYY…RDWITSKTGL (377 aa)) are Extracellular-facing. The region spanning 60–177 (DSFYYHVSFK…SSFKFSDIAM (118 aa)) is the SEA domain. Asn99 carries an N-linked (GlcNAc...) asparagine glycan. The 231-residue stretch at 200–430 (VAGGQDAEEG…YRDWITSKTG (231 aa)) folds into the Peptidase S1 domain. Cys225 and Cys241 form a disulfide bridge. The active-site Charge relay system is His240. N-linked (GlcNAc...) asparagine glycosylation is present at Asn276. Residue Asp285 is the Charge relay system of the active site. Asn347 carries an N-linked (GlcNAc...) asparagine glycan. Intrachain disulfides connect Cys350/Cys366 and Cys377/Cys406. Ser381 functions as the Charge relay system in the catalytic mechanism.

This sequence belongs to the peptidase S1 family. Proteolytically cleaved via an autocatalytic mechanism. Expressed specifically in Purkinje neurons of the cerebellum (at protein level). Also detected in spinal cord.

The protein resides in the cell membrane. It localises to the cell projection. The protein localises to the dendrite. Its subcellular location is the perikaryon. Serine protease which has a preference for Arg or Lys in position P1 and uncharged residues in positions P2 and P3. Shows specificity towards FGF2 in vitro. This Mus musculus (Mouse) protein is Transmembrane protease serine 11C.